Consider the following 563-residue polypeptide: Germacrene-A synthase (563 aa).

Mg(2+) is bound by residues D316, D320, D460, T464, and E468. The DDXXD motif signature appears at 316 to 320 (DDTYD).

The protein belongs to the terpene synthase family. Tpsa subfamily. Requires Mg(2+) as cofactor. Mn(2+) is required as a cofactor. In terms of tissue distribution, high expression in disk florets, moderate expression in ray florets and detected in leaves and stems, but not in roots.

The enzyme catalyses (2E,6E)-farnesyl diphosphate = (+)-(R)-germacrene A + diphosphate. It functions in the pathway secondary metabolite biosynthesis; terpenoid biosynthesis. In terms of biological role, sesquiterpene synthase involved in germacrene A biosynthesis. May be involved in the biosynthesis of the sesquiterpene lactone matricine, one of the major active compounds of chamomile flowers. This is Germacrene-A synthase from Matricaria chamomilla var. recutita (German chamomile).